Here is a 449-residue protein sequence, read N- to C-terminus: Signal recognition particle protein (449 aa).

Residues 109-116 (GLQGGGKT), 191-195 (DTAGR), and 249-252 (SRID) each bind GTP.

Belongs to the GTP-binding SRP family. SRP54 subfamily. As to quaternary structure, part of the signal recognition particle protein translocation system, which is composed of SRP and FtsY. SRP is a ribonucleoprotein composed of Ffh and a 4.5S RNA molecule.

Its subcellular location is the cytoplasm. The catalysed reaction is GTP + H2O = GDP + phosphate + H(+). Functionally, involved in targeting and insertion of nascent membrane proteins into the cytoplasmic membrane. Binds to the hydrophobic signal sequence of the ribosome-nascent chain (RNC) as it emerges from the ribosomes. The SRP-RNC complex is then targeted to the cytoplasmic membrane where it interacts with the SRP receptor FtsY. Interaction with FtsY leads to the transfer of the RNC complex to the Sec translocase for insertion into the membrane, the hydrolysis of GTP by both Ffh and FtsY, and the dissociation of the SRP-FtsY complex into the individual components. The polypeptide is Signal recognition particle protein (Rickettsia prowazekii (strain Madrid E)).